The chain runs to 115 residues: NADH-ubiquinone oxidoreductase chain 3 (115 aa).

3 consecutive transmembrane segments (helical) span residues 4–24 (LLVLLVNSILSLLLILIAFWL), 55–75 (FFLVAITFLLFDLEIALLLPL), and 87–107 (MTLTSFILISVLALGLAYEWL).

Belongs to the complex I subunit 3 family. In terms of assembly, core subunit of respiratory chain NADH dehydrogenase (Complex I) which is composed of 45 different subunits. Interacts with TMEM186. Interacts with TMEM242.

It is found in the mitochondrion inner membrane. It catalyses the reaction a ubiquinone + NADH + 5 H(+)(in) = a ubiquinol + NAD(+) + 4 H(+)(out). Core subunit of the mitochondrial membrane respiratory chain NADH dehydrogenase (Complex I) which catalyzes electron transfer from NADH through the respiratory chain, using ubiquinone as an electron acceptor. Essential for the catalytic activity of complex I. The polypeptide is NADH-ubiquinone oxidoreductase chain 3 (Peromyscus eremicus (Cactus mouse)).